The primary structure comprises 202 residues: Endothelin-1 (202 aa).

The N-terminal stretch at 1–25 is a signal peptide; the sequence is MDYFPVIFSLLFVAFQGAPETAVLG. Residues 26-50 constitute a propeptide that is removed on maturation; it reads AELSPRAEKEVQSPPPSTSWRPRRS. A disordered region spans residues 28 to 47; the sequence is LSPRAEKEVQSPPPSTSWRP. 2 cysteine pairs are disulfide-bonded: Cys-53/Cys-67 and Cys-55/Cys-63. Positions 74 to 202 are excised as a propeptide; sequence VNTPERVVPY…DQKLIHNRAH (129 aa). Residues 110 to 124 are endothelin-like; sequence CQCAHQKDKKCWNFC.

It belongs to the endothelin/sarafotoxin family.

The protein resides in the secreted. Its function is as follows. Endothelins are endothelium-derived vasoconstrictor peptides. Probable ligand for G-protein coupled receptors EDNRA and EDNRB which activates PTK2B, BCAR1, BCAR3 and, GTPases RAP1 and RHOA cascade in glomerular mesangial cells. Also binds the DEAR/FBXW7-AS1 receptor. Promotes mesenteric arterial wall remodeling via activation of ROCK signaling and subsequent colocalization of NFATC3 with F-actin filaments. NFATC3 then translocates to the nucleus where it subsequently promotes the transcription of the smooth muscle hypertrophy and differentiation marker ACTA2. The protein is Endothelin-1 (Edn1) of Rattus norvegicus (Rat).